We begin with the raw amino-acid sequence, 553 residues long: MGDITWVEEGNGSATSSRKRKARPKRFEFVGWGSRQLIEFLHSLGKDTSEMISRYDVSDTIAKYISKEGLLDPSNKKKVVCDKRLVLLFGTRTIFRMKVYDLLEKHYKENQDDSDFDFLYEDEPQIICHSEKIAKRTSKVVKKPRGTFAAIVSDNIKLLYLRKSLVQELLKSPDTFEGKMLGSFVRIKSDPNDYLQKYPYQLVQVTGVKKEHGTDDFLLQVTNYVKDVSISVLSDDNFSQEECEDLHQRIKNGLLKKPTIVEMEEKAKKLHKDQTKHWLGREIELLKRLIDRANEKGWRRELSEYLDKRELLQNPDEQARLLREVPEVIGEELVQNPEVSSPEAHKSDNEQRLSESPLSCIHETPEARNLFGGEDQQFNNGYVMSNPITTPGITSCATEINKGLPTWIASAGAEYLHVDVEQPANGIIGGETPTEESKVSQLQSSIPVNNVDNGSQVQPNPSEVIELSDDDEDDNGDGETLDPKVEDVRVLSYDKEKLNWLYKDPQGLVQGPFSLTQLKAWSDAEYFTKQFRVWMTGESMESAVLLTDVLRLV.

Residues 26 to 109 enclose the SWIB/MDM2 domain; it reads RFEFVGWGSR…YDLLEKHYKE (84 aa). A Plus3 domain is found at 150–275; that stretch reads AIVSDNIKLL…KAKKLHKDQT (126 aa). 2 disordered regions span residues 335–357 and 447–482; these read QNPEVSSPEAHKSDNEQRLSESP and PVNNVDNGSQVQPNPSEVIELSDDDEDDNGDGETLD. The span at 343-353 shows a compositional bias: basic and acidic residues; the sequence is EAHKSDNEQRL. Positions 447–461 are enriched in polar residues; sequence PVNNVDNGSQVQPNP. Residues 466 to 480 are compositionally biased toward acidic residues; it reads ELSDDDEDDNGDGET. One can recognise a GYF domain in the interval 497 to 551; that stretch reads KLNWLYKDPQGLVQGPFSLTQLKAWSDAEYFTKQFRVWMTGESMESAVLLTDVLR.

This is an uncharacterized protein from Arabidopsis thaliana (Mouse-ear cress).